A 191-amino-acid chain; its full sequence is Adenylate kinase (191 aa).

Residue 11 to 16 (GSGKGT) coordinates ATP. Residues 31-60 (STGEILRREIKDKTELGKIAEEYINQGQLL) are NMP. AMP is bound by residues T32, R37, 58–60 (QLL), 86–89 (GFPR), and Q93. The segment at 127–137 (KRGKLFSRKDD) is LID. R128 is a binding site for ATP. Residues R134 and R145 each contribute to the AMP site. Position 173 (N173) interacts with ATP.

This sequence belongs to the adenylate kinase family. Monomer.

The protein localises to the cytoplasm. It carries out the reaction AMP + ATP = 2 ADP. It participates in purine metabolism; AMP biosynthesis via salvage pathway; AMP from ADP: step 1/1. Functionally, catalyzes the reversible transfer of the terminal phosphate group between ATP and AMP. Plays an important role in cellular energy homeostasis and in adenine nucleotide metabolism. This is Adenylate kinase from Azobacteroides pseudotrichonymphae genomovar. CFP2.